A 920-amino-acid chain; its full sequence is MSTNKNHNNNTNNNDNNICINPHIVEFLNKQITNIKNRPGADIKTTSIYKKAIRSLNLYPLPVFSGKECEVLNGFGPSLTKKINDYLKTTSHPLYPKGPPTPLKSIYNRNNNNNDNNNNNNNNNNNNNNNNNNNNNNNNNNSPKKKIRKSKNNNTTSTISNTQSNLIGTESPSKNQNKQLERELKSKKKKQQSAILEQIVEEEDINFEIPTNENYYDYGSGSCFDNNDDNDDGYISSGINTTPDDLNKSFNFDFGSFDNGIPNYNNNNDNGGDNENNINSDIDSNKIKTTTSINDNHKEKYQKNNENYIHENEDNGDDVIVLISPIKTYKYGDMLNKSPSKFKSPSKLRSHNTTNTFNNSNFSNSDNDNNNNIRITTPLKNQNFNKFNDSIIFSPSISSPSPSKLSNYHKYLNNNNNNIKNTPISTSKKRKCNFSSPLLFSPFKYGVTSPFSPSKMKLKSPFKKRFKNDKSPSSSISKNKNSKSNDIVNNDFEDDDEVVNIQSESEINNNNNQFTSHNDNYNYSYNYNNNSNNINNNNNNDDDDDFDLTETEDEKDDYDKDDRTFSNLSVRLSFTEEDLAGVNIGESIINNSKLPKVIPSQIPPPTQSTQSTSTSTSTSKSKSKSTIKIKFKNIKCIIDNREVKSVTERDYICNKLNERGINAQVKKLELGDFVWVAIDEHDNEWLLNYIIERKRVDDLSSSIIDGRYKEQKFRLSKSGCDNIIYLIEGIVSNTINSSSQSQKKTWGTVNFSLSPDALATALVTTSICEGIIIKETKTIDNTIDYIVNITEYFKEKLLKNNNSGGGGGDEIIKFLFANKNTQCTLENFNQLNSKSKGLKLIEFFATQLIQIPGCSAEKAHSITQVYPTPMSLYLALKAIKDKESGESHFKDFTFGKNKRRFGQDVSEVIYNLYTNKKYLN.

6 disordered regions span residues 90–190 (TSHP…KKKK), 265–297 (NNNN…NDNH), 335–376 (LNKS…IRIT), 457–490 (KLKS…IVNN), 505–560 (SEIN…DYDK), and 595–621 (PKVI…TSKS). 2 stretches are compositionally biased toward low complexity: residues 108–142 (NRNN…NNNS) and 152–165 (NNNT…TQSN). The span at 166–178 (LIGTESPSKNQNK) shows a compositional bias: polar residues. 2 stretches are compositionally biased toward low complexity: residues 265–282 (NNNN…NSDI) and 351–372 (HNTT…NNNN). Over residues 457–467 (KLKSPFKKRFK) the composition is skewed to basic residues. 2 stretches are compositionally biased toward low complexity: residues 471-490 (SPSS…IVNN) and 505-539 (SEIN…NNNN). The span at 540-556 (NDDDDDFDLTETEDEKD) shows a compositional bias: acidic residues. The span at 607–620 (QSTQSTSTSTSTSK) shows a compositional bias: low complexity. In terms of domain architecture, ERCC4 spans 635-731 (KCIIDNREVK…NIIYLIEGIV (97 aa)).

The protein belongs to the XPF family. In terms of assembly, interacts with eme1. The cofactor is Mg(2+).

The protein resides in the nucleus. Functionally, component of a DNA structure-specific endonuclease with substrate preference for branched DNA structures with a 5'-end at the branch nick. May be required in mitosis for the processing of stalled or collapsed replication fork intermediates. May be required in meiosis for the repair of meiosis-specific double strand breaks subsequent to single-end invasion (SEI). This Dictyostelium discoideum (Social amoeba) protein is Probable crossover junction endonuclease mus81 (mus81).